An 84-amino-acid chain; its full sequence is Large ribosomal subunit protein bL27 (84 aa).

The disordered stretch occupies residues 1-21 (MAHKKGGGSTKNGRDSNPKYL).

Belongs to the bacterial ribosomal protein bL27 family.

The polypeptide is Large ribosomal subunit protein bL27 (Chlorobium luteolum (strain DSM 273 / BCRC 81028 / 2530) (Pelodictyon luteolum)).